The following is a 686-amino-acid chain: Methionine--tRNA ligase (686 aa).

The 'HIGH' region motif lies at 15-25 (PYANGSIHLGH). Residues Cys146, Cys149, Cys159, and Cys162 each contribute to the Zn(2+) site. A 'KMSKS' region motif is present at residues 332–336 (KMSKS). Lys335 is an ATP binding site. Positions 585 to 686 (AFEAVDMRIA…EGAQPGMRVM (102 aa)) constitute a tRNA-binding domain.

The protein belongs to the class-I aminoacyl-tRNA synthetase family. MetG type 1 subfamily. As to quaternary structure, homodimer. Requires Zn(2+) as cofactor.

Its subcellular location is the cytoplasm. The enzyme catalyses tRNA(Met) + L-methionine + ATP = L-methionyl-tRNA(Met) + AMP + diphosphate. Functionally, is required not only for elongation of protein synthesis but also for the initiation of all mRNA translation through initiator tRNA(fMet) aminoacylation. This chain is Methionine--tRNA ligase, found in Aliivibrio salmonicida (strain LFI1238) (Vibrio salmonicida (strain LFI1238)).